The primary structure comprises 225 residues: MKLKNIAKASLALGILTTGMITTTAQPVKASTLEVRSQATQDLSEYYNRPFFEYTNQSGYKEEGKVTFTPNYQLIDVTLTGNEKQNFGEDISNVDIFVVRENSDRSGNTASIGGITKTNGSNYIDKVKDVNLIITKNIDSVTSTSTSSTYTINKEEISLKELDFKLRKHLIDKHNLYKTEPKDSKIRITMKDGGFYTFELNKKLQTHRMGDVIDGRNIEKIEVNL.

An N-terminal signal peptide occupies residues M1–A30. A sialyl Lewis X-binding region spans residues V94 to Y196.

Belongs to the staphylococcal/streptococcal toxin family. Homodimer (via its C-terminal domain). Interacts with host FCAR and SELPLG (via sialyl Lewis X).

The protein localises to the secreted. Functionally, secreted protein that plays a role in the inhibition of host immune system. Targets myeloid cells such as monocytes or granulocytes through binding with sialyllactosamine-containing glycoproteins. Prevents initial rolling of neutrophils toward the site of infection by interacting with host SELPLG. Disrupts neutrophil motility by induction of cell adhesion via interacting with glycans but independently of SELPLG. The polypeptide is Superantigen-like protein 11 (Staphylococcus aureus (strain Newman)).